The primary structure comprises 283 residues: RNase adapter protein RapZ (283 aa).

ATP is bound at residue Gly-8–Ser-15. Asp-56–Asn-59 contacts GTP. Residues Arg-266 to Lys-283 are RNA-binding.

Belongs to the RapZ-like family. RapZ subfamily. As to quaternary structure, homotrimer.

Functionally, modulates the synthesis of GlmS, by affecting the processing and stability of the regulatory small RNA GlmZ. When glucosamine-6-phosphate (GlcN6P) concentrations are high in the cell, RapZ binds GlmZ and targets it to cleavage by RNase E. Consequently, GlmZ is inactivated and unable to activate GlmS synthesis. Under low GlcN6P concentrations, RapZ is sequestered and inactivated by an other regulatory small RNA, GlmY, preventing GlmZ degradation and leading to synthesis of GlmS. The sequence is that of RNase adapter protein RapZ from Yersinia enterocolitica serotype O:8 / biotype 1B (strain NCTC 13174 / 8081).